Here is a 445-residue protein sequence, read N- to C-terminus: Ribosomal protein uS12 methylthiotransferase RimO (445 aa).

In terms of domain architecture, MTTase N-terminal spans 10-120 (PKVGFVSLGC…VVNAVHEVVP (111 aa)). The [4Fe-4S] cluster site is built by C19, C55, C84, C153, C157, and C160. One can recognise a Radical SAM core domain in the interval 139 to 378 (LTPRHYAYLK…AHQQAISSAR (240 aa)). The region spanning 380 to 445 (QLRIGREIEV…DEYDLWAEQI (66 aa)) is the TRAM domain.

The protein belongs to the methylthiotransferase family. RimO subfamily. It depends on [4Fe-4S] cluster as a cofactor.

It localises to the cytoplasm. It catalyses the reaction L-aspartate(89)-[ribosomal protein uS12]-hydrogen + (sulfur carrier)-SH + AH2 + 2 S-adenosyl-L-methionine = 3-methylsulfanyl-L-aspartate(89)-[ribosomal protein uS12]-hydrogen + (sulfur carrier)-H + 5'-deoxyadenosine + L-methionine + A + S-adenosyl-L-homocysteine + 2 H(+). Its function is as follows. Catalyzes the methylthiolation of an aspartic acid residue of ribosomal protein uS12. This chain is Ribosomal protein uS12 methylthiotransferase RimO, found in Pseudomonas fluorescens (strain Pf0-1).